The sequence spans 1037 residues: Probable aminoglycoside efflux pump (1037 aa).

Residues 1–9 (MANFFIDRP) lie on the Cytoplasmic side of the membrane. A helical membrane pass occupies residues 10–28 (IFAWVLAILLCLTGTLAIF). Over 29-339 (SLPVEQYPDL…TSFVKASIED (311 aa)) the chain is Periplasmic. Residues 340–359 (VVKTLLEAIALVFLVMYLFL) traverse the membrane as a helical segment. Residues 360–365 (QNFRAT) lie on the Cytoplasmic side of the membrane. A helical membrane pass occupies residues 366–385 (LIPTIAVPVVLMGTFSVLYA). The Periplasmic segment spans residues 386–391 (FGYSVN). A helical membrane pass occupies residues 392 to 413 (TLTMFAMVLAIGLLVDDAIVVV). Topologically, residues 414–441 (ENVERIMSEEGLTPREATRKSMGQIQGA) are cytoplasmic. The helical transmembrane segment at 442–460 (LVGIAMVLSAVFVPMAFFG) threads the bilayer. Residues 461 to 473 (GTTGAIYRQFSIT) lie on the Periplasmic side of the membrane. A helical transmembrane segment spans residues 474–496 (IVAAMVLSVLVAMILTPALCATL). The Cytoplasmic segment spans residues 497–537 (LKPLKKGEHHGQKGFFAWFNQMFNRNAERYEKGVAKILHRS). Residues 538 to 556 (LRWIVIYVLLLGGMVFLFL) form a helical membrane-spanning segment. Residues 557 to 870 (RLPTSFLPLE…SYQERLSGAQ (314 aa)) are Periplasmic-facing. The helical transmembrane segment at 871–890 (APALYAISLLVVFLCLAALY) threads the bilayer. Over 891-896 (ESWSVP) the chain is Cytoplasmic. Residues 897–916 (FSVMLVVPLGVIGALLATWM) traverse the membrane as a helical segment. Residues 917–922 (RGLEND) lie on the Periplasmic side of the membrane. The helical transmembrane segment at 923-944 (VYFQVGLLTVIGLSAKNAILIV) threads the bilayer. Residues 945–971 (EFANEMNQKGHDLFEATLHACRQRLRP) are Cytoplasmic-facing. Residues 972 to 990 (ILMTSLAFIFGVLPMATST) traverse the membrane as a helical segment. Residues 991-1003 (GAGSGGQHAVGTG) lie on the Periplasmic side of the membrane. Residues 1004-1026 (VMGGMISATILAIYFVPLFFVLV) traverse the membrane as a helical segment. At 1027–1037 (RRRFPLKPRPE) the chain is on the cytoplasmic side.

This sequence belongs to the resistance-nodulation-cell division (RND) (TC 2.A.6) family.

The protein localises to the cell inner membrane. Functionally, participates in the efflux of aminoglycosides. Confers resistance to a variety of these substances. The protein is Probable aminoglycoside efflux pump (acrD) of Escherichia coli (strain K12).